Consider the following 155-residue polypeptide: Small ribosomal subunit protein uS7cz/uS7cy (155 aa).

It belongs to the universal ribosomal protein uS7 family. In terms of assembly, part of the 30S ribosomal subunit.

The protein localises to the plastid. It is found in the chloroplast. Functionally, one of the primary rRNA binding proteins, it binds directly to 16S rRNA where it nucleates assembly of the head domain of the 30S subunit. This chain is Small ribosomal subunit protein uS7cz/uS7cy (rps7-A), found in Citrus sinensis (Sweet orange).